The chain runs to 438 residues: MDQQPIQVIGGGLAGTEAAWQIAQAGVPVILHEMRPKRFSPAHHTEHLAELVCSNSFGAMASDRAAGLLHEELRQLGSVVIAKADEHAVPAGGALAVDRGQFGQDLTQTLASHPLVEFRRSEVPAIPEGIVVLATGPLTSPDLAADLHRFTGMEYMSFFDAASPIIVGDSINRDIAFMASRYDKGEAAYLNCPMNKEQYLRFREELCKAEQTELKDFERETAKFFEACLPIEELAQRGEDTMRYGPVKPVGLSDSRTGERPYAVVQLRQEDKAGQLWNMVGFQTNLRWGEQKRVFQMIPGLEKAEFVRLGVMHRNTFINAPQLMLPTLQFKQRPTLLAAGQLIGTEGYTAAAAGGWLAGTNAARLALGKEPLALPPTTMLGALLEFISSASPKHFQPMPPNFGILPDLGMKIKSKPERYGRYRDRSLADLSSWKHNLN.

10-15 is a binding site for FAD; it reads GGGLAG.

The protein belongs to the MnmG family. TrmFO subfamily. FAD is required as a cofactor.

The protein resides in the cytoplasm. The catalysed reaction is uridine(54) in tRNA + (6R)-5,10-methylene-5,6,7,8-tetrahydrofolate + NADH + H(+) = 5-methyluridine(54) in tRNA + (6S)-5,6,7,8-tetrahydrofolate + NAD(+). The enzyme catalyses uridine(54) in tRNA + (6R)-5,10-methylene-5,6,7,8-tetrahydrofolate + NADPH + H(+) = 5-methyluridine(54) in tRNA + (6S)-5,6,7,8-tetrahydrofolate + NADP(+). Its function is as follows. Catalyzes the folate-dependent formation of 5-methyl-uridine at position 54 (M-5-U54) in all tRNAs. The chain is Methylenetetrahydrofolate--tRNA-(uracil-5-)-methyltransferase TrmFO from Trichormus variabilis (strain ATCC 29413 / PCC 7937) (Anabaena variabilis).